A 378-amino-acid polypeptide reads, in one-letter code: Putative glycosyltransferase ORF378 (378 aa).

Belongs to the glycosyltransferase group 1 family. Glycosyltransferase 4 subfamily.

The chain is Putative glycosyltransferase ORF378 from Acidianus sp. F28 (AFV-2).